We begin with the raw amino-acid sequence, 216 residues long: MOB kinase activator-like 1 homolog C (216 aa).

Positions 78, 83, 160, and 165 each coordinate Zn(2+).

This sequence belongs to the MOB1/phocein family.

The chain is MOB kinase activator-like 1 homolog C (mobC) from Dictyostelium discoideum (Social amoeba).